A 219-amino-acid polypeptide reads, in one-letter code: Casein kinase II subunit beta' (219 aa).

T2 carries the post-translational modification Phosphothreonine; by autocatalysis.

It belongs to the casein kinase 2 subunit beta family. As to quaternary structure, tetramer of two alpha and two beta' subunits. Post-translationally, phosphorylated by alpha subunit.

In terms of biological role, participates in Wnt signaling. Plays a complex role in regulating the basal catalytic activity of the alpha subunit. This is Casein kinase II subunit beta' (CkIIbeta2) from Drosophila melanogaster (Fruit fly).